Here is a 201-residue protein sequence, read N- to C-terminus: Cell division protein SepF (201 aa).

Residues 1–94 are disordered; that stretch reads MALKDLFSGF…TTSKNNARNV (94 aa). Acidic residues predominate over residues 13–28; sequence VEEEDDELEAPPEENE. Positions 35–44 are enriched in low complexity; that stretch reads PKQQAQSQNQ. Over residues 59-88 the composition is skewed to polar residues; sequence SIQSVPKKQSTRLQQSSGERKYQMNNTTSK.

The protein belongs to the SepF family. In terms of assembly, homodimer. Interacts with FtsZ.

It is found in the cytoplasm. Cell division protein that is part of the divisome complex and is recruited early to the Z-ring. Probably stimulates Z-ring formation, perhaps through the cross-linking of FtsZ protofilaments. Its function overlaps with FtsA. The chain is Cell division protein SepF from Staphylococcus saprophyticus subsp. saprophyticus (strain ATCC 15305 / DSM 20229 / NCIMB 8711 / NCTC 7292 / S-41).